The chain runs to 160 residues: 6,7-dimethyl-8-ribityllumazine synthase (160 aa).

Residues Phe23, Ser61–Glu63, and Ala85–Ile87 each bind 5-amino-6-(D-ribitylamino)uracil. Asp90–Thr91 contributes to the (2S)-2-hydroxy-3-oxobutyl phosphate binding site. Catalysis depends on His93, which acts as the Proton donor. A 5-amino-6-(D-ribitylamino)uracil-binding site is contributed by Phe118. Arg132 serves as a coordination point for (2S)-2-hydroxy-3-oxobutyl phosphate.

The protein belongs to the DMRL synthase family.

The catalysed reaction is (2S)-2-hydroxy-3-oxobutyl phosphate + 5-amino-6-(D-ribitylamino)uracil = 6,7-dimethyl-8-(1-D-ribityl)lumazine + phosphate + 2 H2O + H(+). The protein operates within cofactor biosynthesis; riboflavin biosynthesis; riboflavin from 2-hydroxy-3-oxobutyl phosphate and 5-amino-6-(D-ribitylamino)uracil: step 1/2. In terms of biological role, catalyzes the formation of 6,7-dimethyl-8-ribityllumazine by condensation of 5-amino-6-(D-ribitylamino)uracil with 3,4-dihydroxy-2-butanone 4-phosphate. This is the penultimate step in the biosynthesis of riboflavin. The chain is 6,7-dimethyl-8-ribityllumazine synthase from Synechococcus sp. (strain CC9605).